The primary structure comprises 756 residues: Centromere protein I (756 aa).

The tract at residues M1–Q60 is disordered. Polar residues-rich tracts occupy residues V10 to S28 and D35 to P50.

It belongs to the CENP-I/CTF3 family. Component of the CENPA-CAD complex, composed of CENPI, CENPK, CENPL, CENPO, CENPP, CENPQ, CENPR and CENPS. The CENPA-CAD complex interacts with the CENPA-NAC complex, at least composed of CENPA, CENPC, CENPH, CENPM, CENPN, CENPT and CENPU. Interacts with SENP6. Sumoylated. Sumoylated form can be polyubiquitinated by RNF4, leading to its degradation. Desumoylation by SENP6 prevents its degradation.

It localises to the nucleus. It is found in the chromosome. The protein localises to the centromere. In terms of biological role, component of the CENPA-CAD (nucleosome distal) complex, a complex recruited to centromeres which is involved in assembly of kinetochore proteins, mitotic progression and chromosome segregation. May be involved in incorporation of newly synthesized CENPA into centromeres via its interaction with the CENPA-NAC complex. Required for the localization of CENPF, MAD1L1 and MAD2 (MAD2L1 or MAD2L2) to kinetochores. Involved in the response of gonadal tissues to follicle-stimulating hormone. The sequence is that of Centromere protein I (CENPI) from Homo sapiens (Human).